The sequence spans 89 residues: Small ribosomal subunit protein uS15 (89 aa).

This sequence belongs to the universal ribosomal protein uS15 family. In terms of assembly, part of the 30S ribosomal subunit. Forms a bridge to the 50S subunit in the 70S ribosome, contacting the 23S rRNA.

Its function is as follows. One of the primary rRNA binding proteins, it binds directly to 16S rRNA where it helps nucleate assembly of the platform of the 30S subunit by binding and bridging several RNA helices of the 16S rRNA. In terms of biological role, forms an intersubunit bridge (bridge B4) with the 23S rRNA of the 50S subunit in the ribosome. This chain is Small ribosomal subunit protein uS15, found in Escherichia coli O157:H7.